Consider the following 185-residue polypeptide: Dual-action ribosomal maturation protein DarP (185 aa).

The protein belongs to the DarP family.

Its subcellular location is the cytoplasm. Its function is as follows. Member of a network of 50S ribosomal subunit biogenesis factors which assembles along the 30S-50S interface, preventing incorrect 23S rRNA structures from forming. Promotes peptidyl transferase center (PTC) maturation. In Vibrio vulnificus (strain YJ016), this protein is Dual-action ribosomal maturation protein DarP.